An 873-amino-acid polypeptide reads, in one-letter code: Tyrosine-protein kinase transforming protein Fps (873 aa).

The disordered stretch occupies residues alanine 1–aspartate 46. Positions glutamine 11–serine 29 are enriched in polar residues. Positions methionine 50–glutamate 313 constitute an F-BAR domain. The tract at residues glycine 445–glycine 471 is disordered. Positions glutamine 456–arginine 469 are enriched in basic and acidic residues. Residues tryptophan 511–valine 600 form the SH2 domain. A Protein kinase domain is found at valine 612–leucine 865. ATP contacts are provided by residues isoleucine 618–valine 626 and lysine 641. The active-site Proton acceptor is aspartate 734. A Phosphotyrosine; by autocatalysis modification is found at tyrosine 764.

This sequence belongs to the protein kinase superfamily. Tyr protein kinase family. Fes/fps subfamily.

The enzyme catalyses L-tyrosyl-[protein] + ATP = O-phospho-L-tyrosyl-[protein] + ADP + H(+). This Gallus gallus (Chicken) protein is Tyrosine-protein kinase transforming protein Fps (V-FPS).